The chain runs to 303 residues: MKITVLGCGALGQLWLTALCKQGHEVQGWLRVPQPYCSVNLVETDGSIFNESLTANDPDFLATSDLLLVTLKAWQVSDAVKSLASTLPVTTPILLIHNGMGTIEELQNIQQPLLMGTTTHAACRDGNVIIHVANGITHIGPARQQDGDYSYLADILQTVLPDVAWHNNIRAELWRKLAVNCVINPLTAIWNCPNGELRHHPQEIMQICEEVAAVIEREGHHTSAEDLRDYVMQVIDATAENISSMLQDIRTLRHTEIDYINGFLLRRARAHGIAVPENTRLFEMVKRKESEYERIGTGLPRPW.

NADP(+)-binding positions include 7–12, Asn98, and Ala122; that span reads GCGALG. Asn98 lines the substrate pocket. Lys176 acts as the Proton donor in catalysis. The substrate site is built by Asn180, Asn184, Asn194, and Ser244. Glu256 contributes to the NADP(+) binding site.

Belongs to the ketopantoate reductase family. In terms of assembly, monomer.

Its subcellular location is the cytoplasm. The enzyme catalyses (R)-pantoate + NADP(+) = 2-dehydropantoate + NADPH + H(+). It functions in the pathway cofactor biosynthesis; (R)-pantothenate biosynthesis; (R)-pantoate from 3-methyl-2-oxobutanoate: step 2/2. In terms of biological role, catalyzes the NADPH-dependent reduction of ketopantoate into pantoic acid. The sequence is that of 2-dehydropantoate 2-reductase (panE) from Escherichia coli O157:H7.